The following is a 958-amino-acid chain: Importin-13 (958 aa).

HEAT repeat units follow at residues 19–49 (ENVEKALHQLYYDPNIENKNLAQKWLMQAQV), 51–83 (PQAWHFSWLLLNMDKVPEIQYSAPAPCTSRSPA), 90–130 (PDQY…LSMM), 137–174 (AVADMVRMFQAEDSNVDGRARCLALLELLTVLPEEFQT), 189–226 (LAQECGSVFPLLEQLLQQQDSPGFIKQKVLKCFSSWVQ), 231–263 (LMDCENLIQAAFTSLQDPELFDTAVEAVVNAIS), 271–320 (VNTL…ALLD), 325–367 (WQSF…DDIL), 370–433 (EPDK…YEML), 435–471 (AELLSSLYDKLGRLLTNTEQPSTWQHTEALLYGFQSI), 482–517 (VVPGLIGLIPRISISNVQLADTVMFTIGALSEWLAD), 519–553 (PVMINNVLPLVLQALGNPELSISSVSTLKKICREC), 557–595 (LPPYAANIVAVSQEVLMKQIHKTSQCMWLMQALGFLLSA), 598–643 (VEEI…SNLF), 671–711 (PVVV…VKTL), 715–749 (FAPMVPQLCEMLGQMYSTIPQASAIDLTRQLVHIF), 756–798 (FPPI…ALKR), 810–840 (VKALFHCGVLSLKFPEAPTVKASCGFFTELL), 855–888 (ENGKVLLQAVLEGVGGQASRSLMDHFAEILFALN), and 892–926 (FSYLSIWIKEAMQQDGFPSARVSPEQKETFSQQIL). The 67-residue stretch at 40–106 (AQKWLMQAQV…KSQLFTHITR (67 aa)) folds into the Importin N-terminal domain.

This sequence belongs to the importin beta family.

Its subcellular location is the cytoplasm. It is found in the nucleus. Functionally, functions in nuclear protein import as nuclear transport receptor. Serves as receptor for nuclear localization signals (NLS) in cargo substrates. Is thought to mediate docking of the importin/substrate complex to the nuclear pore complex (NPC) through binding to nucleoporin and the complex is subsequently translocated through the pore by an energy requiring, Ran-dependent mechanism. At the nucleoplasmic side of the NPC, Ran binds to the importin, the importin/substrate complex dissociates and importin is re-exported from the nucleus to the cytoplasm where GTP hydrolysis releases Ran. The directionality of nuclear import is thought to be conferred by an asymmetric distribution of the GTP- and GDP-bound forms of Ran between the cytoplasm and nucleus. This Gallus gallus (Chicken) protein is Importin-13 (IPO13).